A 434-amino-acid chain; its full sequence is E3 ubiquitin-protein ligase siah-1 (434 aa).

The tract at residues 27 to 88 (FEEDENAGPE…NGNTPSVTIP (62 aa)) is disordered. Positions 43–55 (SSSSASSQRSSAS) are enriched in low complexity. Positions 74–88 (MSNNQNGNTPSVTIP) are enriched in polar residues. The RING-type; degenerate zinc finger occupies 171 to 206 (CPVCLEYMLPPYMQCPSGHLVCSNCRPKLQCCPTCR). The segment at 220-415 (IANTVRFPCK…LGINVTISRI (196 aa)) is SBD. An SIAH-type; degenerate zinc finger spans residues 223–283 (TVRFPCKFSN…VMDHLKKVHK (61 aa)). Cys-228, Cys-235, His-247, Cys-251, Cys-258, Cys-265, His-277, and His-282 together coordinate Zn(2+).

Belongs to the SINA (Seven in absentia) family. Interacts with tir-1.

The enzyme catalyses S-ubiquitinyl-[E2 ubiquitin-conjugating enzyme]-L-cysteine + [acceptor protein]-L-lysine = [E2 ubiquitin-conjugating enzyme]-L-cysteine + N(6)-ubiquitinyl-[acceptor protein]-L-lysine.. It functions in the pathway protein modification; protein ubiquitination. In terms of biological role, E3 ubiquitin-protein ligase that mediates ubiquitination and subsequent proteasomal degradation of target proteins. E3 ubiquitin ligases accept ubiquitin from an E2 ubiquitin-conjugating enzyme in the form of a thioester and then directly transfers the ubiquitin to targeted substrates. It probably triggers the ubiquitin-mediated degradation of different substrates. The sequence is that of E3 ubiquitin-protein ligase siah-1 from Caenorhabditis briggsae.